A 274-amino-acid chain; its full sequence is Diaminopimelate epimerase (274 aa).

Residues Asn-11, Gln-44, and Asn-64 each coordinate substrate. Catalysis depends on Cys-73, which acts as the Proton donor. Substrate is bound by residues 74–75 (GN), Asn-157, Asn-190, and 208–209 (ER). Residue Cys-217 is the Proton acceptor of the active site. Position 218–219 (218–219 (GS)) interacts with substrate.

Belongs to the diaminopimelate epimerase family. As to quaternary structure, homodimer.

The protein localises to the cytoplasm. The catalysed reaction is (2S,6S)-2,6-diaminopimelate = meso-2,6-diaminopimelate. Its pathway is amino-acid biosynthesis; L-lysine biosynthesis via DAP pathway; DL-2,6-diaminopimelate from LL-2,6-diaminopimelate: step 1/1. Catalyzes the stereoinversion of LL-2,6-diaminopimelate (L,L-DAP) to meso-diaminopimelate (meso-DAP), a precursor of L-lysine and an essential component of the bacterial peptidoglycan. The chain is Diaminopimelate epimerase from Salmonella agona (strain SL483).